We begin with the raw amino-acid sequence, 497 residues long: Glycerol kinase (497 aa).

An ADP-binding site is contributed by T11. ATP-binding residues include T11, T12, and S13. Residue T11 coordinates sn-glycerol 3-phosphate. R15 is an ADP binding site. Residues R81, E82, Y133, and D242 each contribute to the sn-glycerol 3-phosphate site. Residues R81, E82, Y133, D242, and Q243 each coordinate glycerol. The ADP site is built by T264 and G306. Residues T264, G306, Q310, and G407 each coordinate ATP. ADP contacts are provided by G407 and N411.

Belongs to the FGGY kinase family.

It catalyses the reaction glycerol + ATP = sn-glycerol 3-phosphate + ADP + H(+). Its pathway is polyol metabolism; glycerol degradation via glycerol kinase pathway; sn-glycerol 3-phosphate from glycerol: step 1/1. Its activity is regulated as follows. Inhibited by fructose 1,6-bisphosphate (FBP). Its function is as follows. Key enzyme in the regulation of glycerol uptake and metabolism. Catalyzes the phosphorylation of glycerol to yield sn-glycerol 3-phosphate. The polypeptide is Glycerol kinase (Alcanivorax borkumensis (strain ATCC 700651 / DSM 11573 / NCIMB 13689 / SK2)).